The chain runs to 284 residues: Tropomyosin-2 (284 aa).

A coiled-coil region spans residues 1 to 284; the sequence is MDAIKKKMQA…DQTFAELTGY (284 aa). A disordered region spans residues 82–110; that stretch reads ESEVATQNRKVQQIEEDLEKSEERSTTAQ.

Belongs to the tropomyosin family. Homodimer.

In terms of biological role, tropomyosin, in association with the troponin complex, plays a central role in the calcium dependent regulation of muscle contraction. May also regulate motor systems required to maintain nuclear integrity and apico-basal polarity during embryogenesis. In Drosophila melanogaster (Fruit fly), this protein is Tropomyosin-2 (Tm2).